The following is a 254-amino-acid chain: Alcohol dehydrogenase (254 aa).

An N-acetylmethionine modification is found at M1. 10–33 (FVAALGGIGLDTSRELVKRNLKNF) serves as a coordination point for NAD(+). S138 serves as a coordination point for substrate. Y151 functions as the Proton acceptor in the catalytic mechanism.

Belongs to the short-chain dehydrogenases/reductases (SDR) family. Homodimer.

It catalyses the reaction a primary alcohol + NAD(+) = an aldehyde + NADH + H(+). The catalysed reaction is a secondary alcohol + NAD(+) = a ketone + NADH + H(+). The polypeptide is Alcohol dehydrogenase (Adh) (Drosophila lebanonensis (Fruit fly)).